A 452-amino-acid chain; its full sequence is Ribulose bisphosphate carboxylase large chain (452 aa).

A propeptide spanning residues 1-2 (MS) is cleaved from the precursor. P3 carries the post-translational modification N-acetylproline. K14 is modified (N6,N6,N6-trimethyllysine). Positions 123 and 173 each coordinate substrate. The active-site Proton acceptor is the K175. Residue K177 coordinates substrate. Residues K201, D203, and E204 each contribute to the Mg(2+) site. K201 carries the N6-carboxylysine modification. Catalysis depends on H294, which acts as the Proton acceptor. Positions 295, 327, and 379 each coordinate substrate.

The protein belongs to the RuBisCO large chain family. Type I subfamily. Heterohexadecamer of 8 large chains and 8 small chains; disulfide-linked. The disulfide link is formed within the large subunit homodimers. Mg(2+) serves as cofactor. The disulfide bond which can form in the large chain dimeric partners within the hexadecamer appears to be associated with oxidative stress and protein turnover.

The protein resides in the plastid. The protein localises to the chloroplast. It catalyses the reaction 2 (2R)-3-phosphoglycerate + 2 H(+) = D-ribulose 1,5-bisphosphate + CO2 + H2O. It carries out the reaction D-ribulose 1,5-bisphosphate + O2 = 2-phosphoglycolate + (2R)-3-phosphoglycerate + 2 H(+). In terms of biological role, ruBisCO catalyzes two reactions: the carboxylation of D-ribulose 1,5-bisphosphate, the primary event in carbon dioxide fixation, as well as the oxidative fragmentation of the pentose substrate in the photorespiration process. Both reactions occur simultaneously and in competition at the same active site. The chain is Ribulose bisphosphate carboxylase large chain from Salvadora persica (Toothbrush tree).